Reading from the N-terminus, the 728-residue chain is 1,4-alpha-glucan branching enzyme GlgB (728 aa).

D405 functions as the Nucleophile in the catalytic mechanism. E458 functions as the Proton donor in the catalytic mechanism.

This sequence belongs to the glycosyl hydrolase 13 family. GlgB subfamily. In terms of assembly, monomer.

The enzyme catalyses Transfers a segment of a (1-&gt;4)-alpha-D-glucan chain to a primary hydroxy group in a similar glucan chain.. It participates in glycan biosynthesis; glycogen biosynthesis. Its function is as follows. Catalyzes the formation of the alpha-1,6-glucosidic linkages in glycogen by scission of a 1,4-alpha-linked oligosaccharide from growing alpha-1,4-glucan chains and the subsequent attachment of the oligosaccharide to the alpha-1,6 position. The polypeptide is 1,4-alpha-glucan branching enzyme GlgB (Salmonella typhi).